A 246-amino-acid polypeptide reads, in one-letter code: Acetoacetate decarboxylase (246 aa).

Residue K116 is the Schiff-base intermediate with acetoacetate of the active site.

This sequence belongs to the ADC family.

The catalysed reaction is acetoacetate + H(+) = acetone + CO2. In terms of biological role, catalyzes the conversion of acetoacetate to acetone and carbon dioxide. In Bordetella avium (strain 197N), this protein is Acetoacetate decarboxylase.